The sequence spans 421 residues: Nuclear envelope integral membrane protein 2 (421 aa).

The first 22 residues, 1–22 (MPPGSWWLVLWLPPLATLPAGA), serve as a signal peptide directing secretion. 5 consecutive transmembrane segments (helical) span residues 147 to 167 (NVVD…FFYA), 175 to 195 (VFYY…FVLL), 206 to 226 (TFGA…CQLM), 232 to 252 (LWCG…LCSF), and 279 to 299 (LVLV…MILL).

It belongs to the NEMP family.

It is found in the nucleus inner membrane. This chain is Nuclear envelope integral membrane protein 2 (Nemp2), found in Rattus norvegicus (Rat).